A 388-amino-acid chain; its full sequence is Trichodiene synthase (388 aa).

Mg(2+) contacts are provided by D109, E173, N234, S238, E242, and D248. The aspartate-rich domain stretch occupies residues 109 to 113 (DDSRE).

The protein belongs to the trichodiene synthase family. Mg(2+) is required as a cofactor. Mn(2+) serves as cofactor.

It catalyses the reaction (2E,6E)-farnesyl diphosphate = trichodiene + diphosphate. It participates in sesquiterpene biosynthesis; trichothecene biosynthesis. Trichodiene synthase; part of the gene cluster that mediates the production of the antimicrobial trichothecene harzianum A (HA) that plays a role in Botrytis cinerea antagonistic activity and plant defense priming. The biosynthesis of harzianum A begins with the cyclization of farnesyl diphosphate to trichodiene and is catalyzed by the trichodiene synthase TRI5. Trichodiene undergoes a series of oxygenations catalyzed by the cytochrome P450 monooxygenase TRI4. TRI4 controls the addition of 3 oxygens at C-2, C-11, and the C-12, C-13-epoxide to form the intermediate isotrichodiol. Isotrichodiol then undergoes a non-enzymatic isomerization and cyclization to form 12,13-epoxytrichothec-9-ene (EPT) which is further converted to trichodermol by the cytochrome P450 monooxygenase TRI11 via C-4 hydroxylation. The last step of HA synthesis is esterification of an octatriendioyl moiety to the C-4 oxygen of trichodermol. The octatriendioyl moiety is probably produced by the polyketide synthase TRI17 and the esterification performed by the trichothecene O-acetyltransferase TRI3. The chain is Trichodiene synthase from Trichoderma arundinaceum.